Here is a 1372-residue protein sequence, read N- to C-terminus: Polysaccharide lyase 8 family protein HylA (1372 aa).

The first 25 residues, 1–25 (MIKKIIVVVAFMLTGFSLTAMSASA), serve as a signal peptide directing secretion. The F5/8 type C domain maps to 63–172 (DGDETTRWSA…SIISFEAYEK (110 aa)). The region spanning 183-242 (TENLTISEKRKQQLAFEVSPAGVDITEDQIEWSSSDPTIVTVDQTGNLTAVKSGEAKVTV) is the BIG2 domain. Active-site residues include His487, Tyr496, and Arg550. FIVAR domains are found at residues 1014–1075 (KEAL…VKQL), 1084–1146 (DKTN…VKQL), 1155–1217 (DKTN…VKQL), and 1226–1288 (DKTN…VKRL). The interval 1288–1336 (LTLKNSGENKKEQKNGGNNGHLNTSTGVDQTGTKQVKPSSQGGFRKASQ) is disordered. Positions 1308-1329 (HLNTSTGVDQTGTKQVKPSSQG) are enriched in polar residues. An LPXTG sorting signal motif is present at residues 1338–1342 (LPSTG). A Pentaglycyl murein peptidoglycan amidated threonine modification is found at Thr1341. Positions 1342 to 1372 (GEKKSIALVIIGLLVIASGCLLVFRKSKSKK) are cleaved as a propeptide — removed by sortase.

The protein belongs to the polysaccharide lyase 8 family.

The protein resides in the secreted. The protein localises to the cell wall. Its function is as follows. Has a very modest degradation activity against heparin sodium salt (HS) in vitro. Involved in the pathogenesis of vancomycin-resistant E.faecalis infections. This is Polysaccharide lyase 8 family protein HylA from Enterococcus faecalis (strain ATCC 700802 / V583).